The primary structure comprises 160 residues: Large ribosomal subunit protein uL22c (160 aa).

This sequence belongs to the universal ribosomal protein uL22 family. As to quaternary structure, part of the 50S ribosomal subunit.

The protein resides in the plastid. It is found in the chloroplast. Its function is as follows. This protein binds specifically to 23S rRNA. The globular domain of the protein is located near the polypeptide exit tunnel on the outside of the subunit, while an extended beta-hairpin is found that lines the wall of the exit tunnel in the center of the 70S ribosome. This Crucihimalaya wallichii (Rock-cress) protein is Large ribosomal subunit protein uL22c (rpl22).